Consider the following 431-residue polypeptide: Glutamyl-tRNA(Gln) amidotransferase subunit A (431 aa).

Active-site charge relay system residues include Lys-55 and Ser-130. Catalysis depends on Ser-154, which acts as the Acyl-ester intermediate.

Belongs to the amidase family. GatA subfamily. As to quaternary structure, heterotrimer of A, B and C subunits.

The enzyme catalyses L-glutamyl-tRNA(Gln) + L-glutamine + ATP + H2O = L-glutaminyl-tRNA(Gln) + L-glutamate + ADP + phosphate + H(+). Its function is as follows. Allows the formation of correctly charged Gln-tRNA(Gln) through the transamidation of misacylated Glu-tRNA(Gln) in organisms which lack glutaminyl-tRNA synthetase. The reaction takes place in the presence of glutamine and ATP through an activated gamma-phospho-Glu-tRNA(Gln). This Methanococcus maripaludis (strain C6 / ATCC BAA-1332) protein is Glutamyl-tRNA(Gln) amidotransferase subunit A.